The chain runs to 473 residues: Cannabinoid receptor 1 (473 aa).

The Extracellular segment spans residues 1-118 (MKSILDGLAD…CFMILNPSQQ (118 aa)). The tract at residues 2–23 (KSILDGLADTTFRTITTDLLYV) is required for mitochondrial localization. Residues Asn-79 and Asn-85 are each glycosylated (N-linked (GlcNAc...) asparagine). Residues 119-144 (LAIAVLSLTLGTFTVLENLLVLCVIL) traverse the membrane as a helical segment. The Cytoplasmic segment spans residues 145–156 (HSRSLRCRPSYH). A helical transmembrane segment spans residues 157–177 (FIGSLAVADLLGSVIFVYSFV). The Extracellular segment spans residues 178-189 (DFHVFHRKDSPN). The chain crosses the membrane as a helical span at residues 190–214 (VFLFKLGGVTASFTASVGSLFLTAI). The Cytoplasmic portion of the chain corresponds to 215–234 (DRYISIHRPLAYKRIVTRPK). The chain crosses the membrane as a helical span at residues 235–257 (AVVAFCVMWTIAIVIAVLPLLGW). Residues 258 to 275 (NCKKLNSVCSDIFPLIDE) lie on the Extracellular side of the membrane. A helical membrane pass occupies residues 276–301 (TYLMFWIGVTSILLLFIVYAYMYILW). The Cytoplasmic portion of the chain corresponds to 302 to 346 (KAHSHAVRMLQRGTQKSIIIQSTEDGKVQITRPDQTRMDIRLAKT). A helical transmembrane segment spans residues 347-367 (LVLILVVLIICWGPLLAIMVY). Topologically, residues 368 to 379 (DVFGKMNKLIKT) are extracellular. The chain crosses the membrane as a helical span at residues 380-401 (IFAFCSMLCLLNSTVNPIIYAL). The Cytoplasmic portion of the chain corresponds to 402–473 (RSKDLRHAFR…VSTDTTAEAL (72 aa)). Cys-417 carries the S-palmitoyl cysteine lipid modification.

The protein belongs to the G-protein coupled receptor 1 family. In terms of processing, palmitoylation at Cys-417 is important for recruitment at both plasma membrane and lipid rafts and association with G protein alpha subunits.

It is found in the cell membrane. The protein resides in the mitochondrion outer membrane. It localises to the cell projection. Its subcellular location is the axon. The protein localises to the presynapse. Its function is as follows. G-protein coupled receptor for cannabinoids. Mediates many cannabinoid-induced effects in the central nervous system (CNS), as well as in peripheral tissues. Regulates cellular respiration and energy production in response to cannabinoids. Signaling typically involves reduction in cyclic AMP. The protein is Cannabinoid receptor 1 (CNR1) of Taeniopygia guttata (Zebra finch).